A 209-amino-acid polypeptide reads, in one-letter code: Large ribosomal subunit protein uL3 (209 aa).

The disordered stretch occupies residues 133–152; that stretch reads THGNSLSHRVPGSIGQNQTP. Glutamine 150 is subject to N5-methylglutamine.

It belongs to the universal ribosomal protein uL3 family. Part of the 50S ribosomal subunit. Forms a cluster with proteins L14 and L19. Post-translationally, methylated by PrmB.

One of the primary rRNA binding proteins, it binds directly near the 3'-end of the 23S rRNA, where it nucleates assembly of the 50S subunit. The sequence is that of Large ribosomal subunit protein uL3 from Yersinia enterocolitica serotype O:8 / biotype 1B (strain NCTC 13174 / 8081).